The sequence spans 253 residues: Proteasome subunit alpha type-7 (253 aa).

This sequence belongs to the peptidase T1A family. As to quaternary structure, the 26S proteasome consists of a 20S proteasome core and two 19S regulatory subunits. The 20S proteasome core is composed of 28 subunits that are arranged in four stacked rings, resulting in a barrel-shaped structure. The two end rings are each formed by seven alpha subunits, and the two central rings are each formed by seven beta subunits. The catalytic chamber with the active sites is on the inside of the barrel.

It is found in the cytoplasm. The protein localises to the nucleus. In terms of biological role, the proteasome is a multicatalytic proteinase complex which is characterized by its ability to cleave peptides with Arg, Phe, Tyr, Leu, and Glu adjacent to the leaving group at neutral or slightly basic pH. The proteasome has an ATP-dependent proteolytic activity. The polypeptide is Proteasome subunit alpha type-7 (pas-4) (Caenorhabditis elegans).